A 952-amino-acid polypeptide reads, in one-letter code: Calsyntenin-1 (952 aa).

The first 28 residues, 1–28 (MLRRPAPALARAVRLLLAGLLYGGGVWA), serve as a signal peptide directing secretion. Over 29–830 (ARVNKHKPWL…PHPFAVVPST (802 aa)) the chain is Extracellular. Cadherin domains follow at residues 38–154 (LEPT…APVF) and 155–255 (KEKS…SPGW). Asparagine 356 carries N-linked (GlcNAc...) asparagine glycosylation. A helical transmembrane segment spans residues 831 to 851 (ATVVIVVCVSFLVFMIILGVF). The Cytoplasmic portion of the chain corresponds to 852–952 (RIRAAHQRTM…LEWDYSTLSY (101 aa)). Positions 886 to 952 (METYEDQHSS…LEWDYSTLSY (67 aa)) are disordered. Positions 896 to 930 (EEEEEEEEEEESEDGEEEEDITSAESESSEEEEGG) are enriched in acidic residues. Positions 934 to 952 (GQNTTRQQQLEWDYSTLSY) are enriched in polar residues.

Belongs to the calsyntenin family. In terms of assembly, directly interacts with APBA2. Forms a tripartite complex with APBA2 and APP. Interacts with KLC1. Interacts with APBB1; this interaction stabilizes AlcICD metabolism. As to quaternary structure, interacts with PSEN1. Post-translationally, proteolytically processed under normal cellular conditions. A primary zeta-cleavage generates a large extracellular (soluble) N-terminal domain (sAlc) and a short C-terminal transmembrane fragment (CTF1). A secondary cleavage catalyzed by presenilin gamma-secretase within the transmembrane domain releases the beta-Alc-alpha chain in the extracellular milieu and produces an intracellular fragment (AlcICD). This processing is strongly suppressed in the tripartite complex formed with APBA2 and APP, which seems to prevent the association with PSEN1. Preferentially expressed in the retina and brain.

The protein resides in the postsynaptic cell membrane. It localises to the endoplasmic reticulum membrane. The protein localises to the golgi apparatus membrane. Its subcellular location is the cell projection. It is found in the neuron projection. The protein resides in the nucleus. Postsynaptic adhesion molecule that binds to presynaptic neurexins to mediate both excitatory and inhibitory synapse formation. Promotes synapse development by acting as a cell adhesion molecule at the postsynaptic membrane, which associates with neurexin-alpha at the presynaptic membrane. Also functions as a cargo in axonal anterograde transport by acting as a molecular adapter that promotes KLC1 association with vesicles. Complex formation with APBA2 and APP, stabilizes APP metabolism and enhances APBA2-mediated suppression of beta-APP40 secretion, due to the retardation of intracellular APP maturation. Functionally, as intracellular fragment AlcICD, suppresses APBB1-dependent transactivation stimulated by APP C-terminal intracellular fragment (AICD), most probably by competing with AICD for APBB1-binding. In terms of biological role, in complex with APBA2 and C99, a C-terminal APP fragment, abolishes C99 interaction with PSEN1 and thus APP C99 cleavage by gamma-secretase, most probably through stabilization of the direct interaction between APBA2 and APP. This chain is Calsyntenin-1 (Clstn1), found in Rattus norvegicus (Rat).